A 121-amino-acid chain; its full sequence is Small ribosomal subunit protein bS6 (121 aa).

Belongs to the bacterial ribosomal protein bS6 family.

Functionally, binds together with bS18 to 16S ribosomal RNA. The protein is Small ribosomal subunit protein bS6 of Rickettsia conorii (strain ATCC VR-613 / Malish 7).